Here is a 227-residue protein sequence, read N- to C-terminus: Lipoprotein-releasing system ATP-binding protein LolD (227 aa).

Residues 7-227 enclose the ABC transporter domain; sequence LSCRDLGKSY…HLQEGHLVAI (221 aa). 43-50 contributes to the ATP binding site; it reads GTSGSGKS.

Belongs to the ABC transporter superfamily. Lipoprotein translocase (TC 3.A.1.125) family. The complex is composed of two ATP-binding proteins (LolD) and two transmembrane proteins (LolC and LolE).

It is found in the cell inner membrane. In terms of biological role, part of the ABC transporter complex LolCDE involved in the translocation of mature outer membrane-directed lipoproteins, from the inner membrane to the periplasmic chaperone, LolA. Responsible for the formation of the LolA-lipoprotein complex in an ATP-dependent manner. The polypeptide is Lipoprotein-releasing system ATP-binding protein LolD (Pseudomonas fluorescens (strain ATCC BAA-477 / NRRL B-23932 / Pf-5)).